The primary structure comprises 545 residues: MALRRGGCGALGLLLLLLGAACLIPRSAQVRRLARCPATCSCTKESIICVGSSWVPRIVPGDISSLSLVNGTFSEIKDRMFSHLPSLQLLLLNSNSFTIIRDDAFAGLFHLEYLFIEGNKIETISRNAFRGLRDLTHLSLANNHIKALPRDVFSDLDSLIELDLRGNKFECDCKAKWLYLWLKMTNSTVSDVLCIGPPEYQEKKLNDVTSFDYECTTTDFVVHQTLPYQSVSVDTFNSKNDVYVAIAQPSMENCMVLEWDHIEMNFRSYDNITGQSIVGCKAILIDDQVFVVVAQLFGGSHIYKYDESWTKFVKFQDIEVSRISKPNDIELFQIDDETFFVIADSSKAGLSTVYKWNSKGFYSYQSLHEWFRDTDAEFVDIDGKSHLILSSRSQVPIILQWNKSSKKFVPHGDIPNMEDVLAVKSFRMQNTLYLSLTRFIGDSRVMRWNSKQFVEIQALPSRGAMTLQPFSFKDNHYLALGSDYTFSQIYQWDKEKQLFKKFKEIYVQAPRSFTAVSTDRRDFFFASSFKGKTKIFEHIIVDLSL.

The N-terminal stretch at 1 to 28 is a signal peptide; it reads MALRRGGCGALGLLLLLLGAACLIPRSA. Positions 29–65 constitute an LRRNT domain; sequence QVRRLARCPATCSCTKESIICVGSSWVPRIVPGDISS. N-linked (GlcNAc...) asparagine glycosylation is present at asparagine 70. LRR repeat units lie at residues 86 to 107, 110 to 131, and 134 to 155; these read SLQL…AFAG, HLEY…AFRG, and DLTH…VFSD. The 51-residue stretch at 167–217 folds into the LRRCT domain; that stretch reads NKFECDCKAKWLYLWLKMTNSTVSDVLCIGPPEYQEKKLNDVTSFDYECTT. Asparagine 186 is a glycosylation site (N-linked (GlcNAc...) asparagine). EAR repeat units follow at residues 219–261, 265–307, 311–358, 360–403, 407–450, 452–494, and 498–540; these read DFVV…EWDH, NFRS…KYDE, KFVK…KWNS, GFYS…QWNK, KFVP…RWNS, QFVE…QWDK, and LFKK…EHII. The N-linked (GlcNAc...) asparagine glycan is linked to asparagine 271. An N-linked (GlcNAc...) asparagine glycan is attached at asparagine 402.

Brain, heart and placenta.

It localises to the secreted. Required for the development of soma-targeting inhibitory GABAergic synapses made by parvalbumin-positive basket cells. This chain is Leucine-rich repeat LGI family member 2 (LGI2), found in Homo sapiens (Human).